Consider the following 122-residue polypeptide: Antitoxin protein TsiV3 (122 aa).

The first 24 residues, 1–24, serve as a signal peptide directing secretion; that stretch reads MNNLLSAYVTMLLILLSISGGAIA. 2 disulfides stabilise this stretch: Cys28/Cys41 and Cys82/Cys100.

Homodimer; dimerization is critical for inhibitory activity. Forms a heterotetramer with VgrG3 composed of one TsiV3 homodimer and two VgrG3 molecules.

In terms of biological role, immunity protein that plays a role in preventing early activation of toxin VgrG3. This Vibrio cholerae serotype O1 (strain ATCC 39315 / El Tor Inaba N16961) protein is Antitoxin protein TsiV3.